A 116-amino-acid polypeptide reads, in one-letter code: Large ribosomal subunit protein bL17 (116 aa).

This sequence belongs to the bacterial ribosomal protein bL17 family. As to quaternary structure, part of the 50S ribosomal subunit. Contacts protein L32.

This chain is Large ribosomal subunit protein bL17, found in Helicobacter acinonychis (strain Sheeba).